Reading from the N-terminus, the 342-residue chain is Peroxisomal membrane protein import receptor PEX19 (342 aa).

Residues 1–18 are compositionally biased toward acidic residues; it reads MNENEYDNFDDLDDLLDE. Disordered regions lie at residues 1-68 and 119-141; these read MNEN…DPEL and CSSL…GFKN. A compositionally biased stretch (basic and acidic residues) spans 41-54; the sequence is SENKEKNAESKDSD. Phosphoserine is present on Ser62. A Phosphoserine modification is found at Ser304. The segment at 321-342 is disordered; that stretch reads IDGNDPNLGNLDKELTDGCKQQ. Residues 331 to 342 are compositionally biased toward basic and acidic residues; that stretch reads LDKELTDGCKQQ. Position 339 is a cysteine methyl ester (Cys339). Cys339 is lipidated: S-farnesyl cysteine. Residues 340-342 constitute a propeptide, removed in mature form; the sequence is KQQ.

This sequence belongs to the peroxin-19 family. Interacts (farnesylated) with PEX3; farnesylation is required for this interaction. Interacts with PEX2, PEX5, PEX10, PEX11, PEX12, PEX13, PEX14, PEX17, PEX22, PEX25, PEX30 and PEX32; the interaction requires well-defined PEX19-binding sites within the peroxisomal membrane protein targeting signal (mPTS) of the PMPs and is independent on the presence of PEX3. Interacts with VPS1.

The protein localises to the cytoplasm. Its subcellular location is the peroxisome membrane. It localises to the endoplasmic reticulum membrane. Functionally, required for proper post-translational import and stabilization of peroxisomal membrane proteins (PMPs). Acts as a cytosolic import receptor for PMPs and delivers them to the docking factor PEX3 at the peroxisomal membrane for subsequent insertion into the membrane. Acts as a chaperone in stabilizing or maintaining PMPs in the lipid bilayer. Directs PEX17, a peripheral component of the peroxisomal matrix protein translocation machinery, to peroxisomes. Stabilizes VPS1, a protein required for peroxisomal fission, at the peroxisomal membrane. Also acts in conjunction with PEX3 in the formation of peroxisomes from preperoxisomal compartments at the endoplasmic reticulum during de novo peroxisome synthesis, probably via the import of additional PMPs. This Saccharomyces cerevisiae (strain ATCC 204508 / S288c) (Baker's yeast) protein is Peroxisomal membrane protein import receptor PEX19 (PEX19).